The following is a 627-amino-acid chain: Chaperone protein HtpG (627 aa).

The interval 1–343 (MATQEFQAET…SEDLSLNISR (343 aa)) is a; substrate-binding. Residues 344 to 553 (EMLQQDKQLK…EGEISIEMEK (210 aa)) are b. Residues 554–627 (VLQSMPNNQN…YTNNVCKIMS (74 aa)) are c.

This sequence belongs to the heat shock protein 90 family. As to quaternary structure, homodimer.

Its subcellular location is the cytoplasm. In terms of biological role, molecular chaperone. Has ATPase activity. In Natranaerobius thermophilus (strain ATCC BAA-1301 / DSM 18059 / JW/NM-WN-LF), this protein is Chaperone protein HtpG.